A 64-amino-acid polypeptide reads, in one-letter code: uncharacterized protein (64 aa).

This is an uncharacterized protein from African swine fever virus (strain Badajoz 1971 Vero-adapted) (Ba71V).